A 757-amino-acid polypeptide reads, in one-letter code: Nitrogen fixation protein FixI (757 aa).

Residues 1 to 121 (MSCCASSAAI…GEEEGDDLLK (121 aa)) lie on the Cytoplasmic side of the membrane. Residues 37–107 (RQTELSVPNA…AIAERGYQTH (71 aa)) form the HMA domain. A metal cation is bound by residues Cys48 and Cys51. Residues 122 to 143 (QLILAVAVSGFAATNIMLLSVS) traverse the membrane as a helical segment. At 144-158 (VWSGADAATRDLFHW) the chain is on the extracellular side. Residues 159-178 (ISALIAGPALIYAGRFFYKS) traverse the membrane as a helical segment. Residues 179-185 (AWNAIRH) are Cytoplasmic-facing. A helical transmembrane segment spans residues 186-206 (GRTNMDVPIALAVSLSYGMSL). Topologically, residues 207 to 218 (HETIGHGEHAWF) are extracellular. The chain crosses the membrane as a helical span at residues 219-239 (DASVTLLFFLLIGRTLDHMMR). The Cytoplasmic segment spans residues 240-368 (GRARTAISGL…RARYRRIADR (129 aa)). Residues 369-391 (AARYYSPAVHLLALLTFVGWMLV) traverse the membrane as a helical segment. The Extracellular portion of the chain corresponds to 392 to 398 (EGDVRHA). The helical transmembrane segment at 399-416 (MLVAVAVLIITCPCALGL) threads the bilayer. At 417-688 (AVPVVQVVAA…ETSRHAGQLI (272 aa)) the chain is on the cytoplasmic side. Asp454 acts as the 4-aspartylphosphate intermediate in catalysis. Mg(2+) contacts are provided by Asp634 and Asp638. The chain crosses the membrane as a helical span at residues 689–708 (RQNFALAIGYNVIAVPIAIL). Residues 709–713 (GYATP) lie on the Extracellular side of the membrane. Residues 714–732 (LVAAVAMSSSSLVVVFNAL) form a helical membrane-spanning segment. At 733–757 (RLKRSLAAGRGATPGTLIHSGAVTS) the chain is on the cytoplasmic side.

This sequence belongs to the cation transport ATPase (P-type) (TC 3.A.3) family. Type IB subfamily.

The protein resides in the cell membrane. The enzyme catalyses ATP + H2O = ADP + phosphate + H(+). In terms of biological role, fixI is a pump of a specific cation involved in symbiotic nitrogen fixation. The four proteins FixG, FixH, FixI, and FixS may participate in a membrane-bound complex coupling the FixI cation pump with a redox process catalyzed by FixG. This chain is Nitrogen fixation protein FixI (fixI), found in Rhizobium meliloti (strain 1021) (Ensifer meliloti).